A 201-amino-acid polypeptide reads, in one-letter code: 3-isopropylmalate dehydratase small subunit (201 aa).

The protein belongs to the LeuD family. LeuD type 1 subfamily. Heterodimer of LeuC and LeuD.

The catalysed reaction is (2R,3S)-3-isopropylmalate = (2S)-2-isopropylmalate. Its pathway is amino-acid biosynthesis; L-leucine biosynthesis; L-leucine from 3-methyl-2-oxobutanoate: step 2/4. In terms of biological role, catalyzes the isomerization between 2-isopropylmalate and 3-isopropylmalate, via the formation of 2-isopropylmaleate. The sequence is that of 3-isopropylmalate dehydratase small subunit from Pasteurella multocida (strain Pm70).